Reading from the N-terminus, the 130-residue chain is Large ribosomal subunit protein bL12 (130 aa).

The protein belongs to the bacterial ribosomal protein bL12 family. Homodimer. Part of the ribosomal stalk of the 50S ribosomal subunit. Forms a multimeric L10(L12)X complex, where L10 forms an elongated spine to which 2 to 4 L12 dimers bind in a sequential fashion. Binds GTP-bound translation factors.

Functionally, forms part of the ribosomal stalk which helps the ribosome interact with GTP-bound translation factors. Is thus essential for accurate translation. This is Large ribosomal subunit protein bL12 from Mycolicibacterium vanbaalenii (strain DSM 7251 / JCM 13017 / BCRC 16820 / KCTC 9966 / NRRL B-24157 / PYR-1) (Mycobacterium vanbaalenii).